Here is a 233-residue protein sequence, read N- to C-terminus: Large ribosomal subunit protein uL1 (233 aa).

The protein belongs to the universal ribosomal protein uL1 family. In terms of assembly, part of the 50S ribosomal subunit.

In terms of biological role, binds directly to 23S rRNA. The L1 stalk is quite mobile in the ribosome, and is involved in E site tRNA release. Protein L1 is also a translational repressor protein, it controls the translation of the L11 operon by binding to its mRNA. This is Large ribosomal subunit protein uL1 from Vibrio cholerae serotype O1 (strain ATCC 39315 / El Tor Inaba N16961).